Reading from the N-terminus, the 258-residue chain is Tryptophan synthase alpha chain (258 aa).

Active-site proton acceptor residues include E52 and D63.

Belongs to the TrpA family. As to quaternary structure, tetramer of two alpha and two beta chains.

The enzyme catalyses (1S,2R)-1-C-(indol-3-yl)glycerol 3-phosphate + L-serine = D-glyceraldehyde 3-phosphate + L-tryptophan + H2O. Its pathway is amino-acid biosynthesis; L-tryptophan biosynthesis; L-tryptophan from chorismate: step 5/5. Its function is as follows. The alpha subunit is responsible for the aldol cleavage of indoleglycerol phosphate to indole and glyceraldehyde 3-phosphate. The polypeptide is Tryptophan synthase alpha chain (Streptococcus pneumoniae (strain P1031)).